Reading from the N-terminus, the 262-residue chain is Acyl-[acyl-carrier-protein]--UDP-N-acetylglucosamine O-acyltransferase (262 aa).

Belongs to the transferase hexapeptide repeat family. LpxA subfamily. Homotrimer.

Its subcellular location is the cytoplasm. The enzyme catalyses a (3R)-hydroxyacyl-[ACP] + UDP-N-acetyl-alpha-D-glucosamine = a UDP-3-O-[(3R)-3-hydroxyacyl]-N-acetyl-alpha-D-glucosamine + holo-[ACP]. It functions in the pathway glycolipid biosynthesis; lipid IV(A) biosynthesis; lipid IV(A) from (3R)-3-hydroxytetradecanoyl-[acyl-carrier-protein] and UDP-N-acetyl-alpha-D-glucosamine: step 1/6. Functionally, involved in the biosynthesis of lipid A, a phosphorylated glycolipid that anchors the lipopolysaccharide to the outer membrane of the cell. The polypeptide is Acyl-[acyl-carrier-protein]--UDP-N-acetylglucosamine O-acyltransferase (Campylobacter concisus (strain 13826)).